A 347-amino-acid polypeptide reads, in one-letter code: Phenylalanine--tRNA ligase alpha subunit (347 aa).

Glu261 is a Mg(2+) binding site.

The protein belongs to the class-II aminoacyl-tRNA synthetase family. Phe-tRNA synthetase alpha subunit type 1 subfamily. As to quaternary structure, tetramer of two alpha and two beta subunits. Requires Mg(2+) as cofactor.

The protein localises to the cytoplasm. It catalyses the reaction tRNA(Phe) + L-phenylalanine + ATP = L-phenylalanyl-tRNA(Phe) + AMP + diphosphate + H(+). This chain is Phenylalanine--tRNA ligase alpha subunit, found in Streptococcus thermophilus (strain CNRZ 1066).